Reading from the N-terminus, the 333-residue chain is DNA-directed RNA polymerase subunit alpha (333 aa).

The alpha N-terminal domain (alpha-NTD) stretch occupies residues 1 to 234; it reads MQSSVNEFLT…QQLAAFVDLK (234 aa). The interval 248 to 333 is alpha C-terminal domain (alpha-CTD); it reads IDPILLRPVD…SLKKDDKATA (86 aa).

It belongs to the RNA polymerase alpha chain family. Homodimer. The RNAP catalytic core consists of 2 alpha, 1 beta, 1 beta' and 1 omega subunit. When a sigma factor is associated with the core the holoenzyme is formed, which can initiate transcription.

It catalyses the reaction RNA(n) + a ribonucleoside 5'-triphosphate = RNA(n+1) + diphosphate. DNA-dependent RNA polymerase catalyzes the transcription of DNA into RNA using the four ribonucleoside triphosphates as substrates. The polypeptide is DNA-directed RNA polymerase subunit alpha (Pseudomonas aeruginosa (strain UCBPP-PA14)).